Here is a 330-residue protein sequence, read N- to C-terminus: Aspartate--ammonia ligase (330 aa).

The protein belongs to the class-II aminoacyl-tRNA synthetase family. AsnA subfamily.

Its subcellular location is the cytoplasm. The enzyme catalyses L-aspartate + NH4(+) + ATP = L-asparagine + AMP + diphosphate + H(+). It participates in amino-acid biosynthesis; L-asparagine biosynthesis; L-asparagine from L-aspartate (ammonia route): step 1/1. This chain is Aspartate--ammonia ligase, found in Haemophilus influenzae (strain PittGG).